Reading from the N-terminus, the 227-residue chain is PKHD-type hydroxylase ACICU_00484 (227 aa).

In terms of domain architecture, Fe2OG dioxygenase spans 78-178 (DIIPPLFNRY…RIASFFWVQS (101 aa)). H96, D98, and H159 together coordinate Fe cation. R169 contacts 2-oxoglutarate.

Requires Fe(2+) as cofactor. L-ascorbate serves as cofactor.

In Acinetobacter baumannii (strain ACICU), this protein is PKHD-type hydroxylase ACICU_00484.